The chain runs to 149 residues: Calmodulin (149 aa).

Residue Ala-2 is modified to N-acetylalanine. 4 consecutive EF-hand domains span residues 8–43 (EQIA…LGQN), 44–79 (PTEA…KMKD), 81–116 (DSEE…LGEK), and 117–149 (LTDE…MMSK). 14 residues coordinate Ca(2+): Asp-21, Asp-23, Asp-25, Thr-27, Glu-32, Asp-57, Asp-59, Asn-61, Thr-63, Glu-68, Asp-94, Asp-96, Asn-98, and Glu-105. N6,N6,N6-trimethyllysine is present on Lys-116. The Ca(2+) site is built by Asp-130, Asp-132, Asp-134, Gln-136, and Glu-141.

This sequence belongs to the calmodulin family.

Its function is as follows. Calmodulin mediates the control of a large number of enzymes, ion channels and other proteins by Ca(2+). Among the enzymes to be stimulated by the calmodulin-Ca(2+) complex are a number of protein kinases and phosphatases. In Lumbricus rubellus (Humus earthworm), this protein is Calmodulin.